A 307-amino-acid chain; its full sequence is Leucine-rich repeat-containing protein 59 (307 aa).

Over 1 to 247 the chain is Cytoplasmic; sequence MARANGRSQN…LAQRQSRLRK (247 aa). LRR repeat units lie at residues 10-31, 40-61, 63-84, 86-107, and 109-131; these read NLRD…SEVP, KATA…FCNL, HIVR…FGRL, NLQH…FAQL, and SLKW…AGDC. Residues 156–222 adopt a coiled-coil conformation; the sequence is EIELQRKLQL…LNSNKKAEEE (67 aa). Positions 170–238 are disordered; the sequence is KKKLEAKQRV…RMATPKEKKL (69 aa). Basic and acidic residues-rich tracts occupy residues 174–187 and 194–238; these read EAKQ…EREM and QQKE…EKKL. Residues 248–268 traverse the membrane as a helical segment; the sequence is IACILLFGLLVVLLVVVACRF. Topologically, residues 269–307 are lumenal; the sequence is TDLKAINMCTSVNAIYKETLSALHSNPVLERFLQDPSSQ.

In terms of assembly, interacts with SGO1.

The protein localises to the microsome membrane. Its subcellular location is the endoplasmic reticulum membrane. The protein resides in the nucleus envelope. In terms of biological role, required for nuclear import of FGF1. The polypeptide is Leucine-rich repeat-containing protein 59 (lrrc59) (Xenopus laevis (African clawed frog)).